The chain runs to 742 residues: 5-methyltetrahydropteroyltriglutamate--homocysteine methyltransferase (742 aa).

5-methyltetrahydropteroyltri-L-glutamate contacts are provided by residues 18–21 (REWK) and Lys112. L-homocysteine-binding positions include 420 to 422 (IGS) and Glu473. Residues 420–422 (IGS) and Glu473 contribute to the L-methionine site. Trp550 is a 5-methyltetrahydropteroyltri-L-glutamate binding site. Asp588 contacts L-homocysteine. Residue Asp588 coordinates L-methionine. Glu594 contributes to the 5-methyltetrahydropteroyltri-L-glutamate binding site. Zn(2+) contacts are provided by His630, Cys632, and Glu654. His683 (proton donor) is an active-site residue. Cys715 lines the Zn(2+) pocket.

This sequence belongs to the vitamin-B12 independent methionine synthase family. Zn(2+) serves as cofactor.

The catalysed reaction is 5-methyltetrahydropteroyltri-L-glutamate + L-homocysteine = tetrahydropteroyltri-L-glutamate + L-methionine. Its pathway is amino-acid biosynthesis; L-methionine biosynthesis via de novo pathway; L-methionine from L-homocysteine (MetE route): step 1/1. Functionally, catalyzes the transfer of a methyl group from 5-methyltetrahydrofolate to homocysteine resulting in methionine formation. The polypeptide is 5-methyltetrahydropteroyltriglutamate--homocysteine methyltransferase (Staphylococcus aureus (strain USA300)).